We begin with the raw amino-acid sequence, 387 residues long: Putative transposase y4pF/y4sB (387 aa).

It belongs to the transposase 20 family.

This Sinorhizobium fredii (strain NBRC 101917 / NGR234) protein is Putative transposase y4pF/y4sB.